Here is a 557-residue protein sequence, read N- to C-terminus: MKKGYEVLRDPHLNKGMAFTLEERQQLNIHGLLPPCFLGQDAQVYSILKNFERLTSDLDRYILLMSLQDRNEKLFYKVLTSDIERFMPIVYTPTVGLACQHYGLAFRRPRGLFITIHDRGHIATMLQSWPESVIKAIVVTDGERILGLGDLGCYGMGIPVGKLALYTACGGVKPHQCLPVMLDVGTDNETLLKDPLYIGLRHKRIRGQAYDDLLDEFMEAVTSRYGMNCLIQFEDFANANAFRLLHKYRNKYCTFNDDIQGTASVAVAGLLAALRITKNRLSDHTVLFQGAGEAALGIANLIVMAMQKEGVSKEEAIKRIWMVDSKGLIVKGRASLTPEKEHFAHEHCEMKNLEDIVKDIKPTVLIGVAAIGGAFTQQILQDMAAFNKRPIIFALSNPTSKAECTAEQLYKYTEGRGIFASGSPFDPVTLPSGQTLYPGQGNNSYVFPGVALGVISCGLKHIGDDVFLTTAEVIAQEVSEENLQEGRLYPPLVTIQQVSLKIAVRIAKEAYRNNTASTYPQPEDLEAFIRSQVYSTDYNCFVADSYTWPEEAMKVKL.

Tyrosine 91 functions as the Proton donor in the catalytic mechanism. An NADP(+)-binding site is contributed by arginine 144. 2 residues coordinate substrate: arginine 144 and lysine 162. The active-site Proton acceptor is the lysine 162. Residues glutamate 234 and aspartate 235 each contribute to the Mn(2+) site. Asparagine 238 is an NADP(+) binding site. Aspartate 258 provides a ligand contact to Mn(2+). Residues 291–294 (AGEA), serine 325, asparagine 397, and asparagine 443 contribute to the NADP(+) site. Asparagine 443 contacts substrate.

This sequence belongs to the malic enzymes family. Homotetramer. Requires Mg(2+) as cofactor. Mn(2+) is required as a cofactor. The N-terminus is blocked.

It is found in the cytoplasm. It catalyses the reaction (S)-malate + NADP(+) = pyruvate + CO2 + NADPH. It carries out the reaction oxaloacetate + H(+) = pyruvate + CO2. The polypeptide is NADP-dependent malic enzyme (ME1) (Columba livia (Rock dove)).